The sequence spans 391 residues: 1-deoxy-D-xylulose 5-phosphate reductoisomerase (391 aa).

The NADPH site is built by Thr-17, Gly-18, Ser-19, Ile-20, Asn-47, and Asn-130. Position 131 (Lys-131) interacts with 1-deoxy-D-xylulose 5-phosphate. Residue Glu-132 coordinates NADPH. Position 156 (Asp-156) interacts with Mn(2+). Ser-157, Glu-158, Ser-182, and His-205 together coordinate 1-deoxy-D-xylulose 5-phosphate. Glu-158 is a Mn(2+) binding site. Residue Gly-211 participates in NADPH binding. 1-deoxy-D-xylulose 5-phosphate contacts are provided by Ser-218, Asn-223, Lys-224, and Glu-227. Position 227 (Glu-227) interacts with Mn(2+).

Belongs to the DXR family. The cofactor is Mg(2+). Requires Mn(2+) as cofactor.

It carries out the reaction 2-C-methyl-D-erythritol 4-phosphate + NADP(+) = 1-deoxy-D-xylulose 5-phosphate + NADPH + H(+). It participates in isoprenoid biosynthesis; isopentenyl diphosphate biosynthesis via DXP pathway; isopentenyl diphosphate from 1-deoxy-D-xylulose 5-phosphate: step 1/6. Its function is as follows. Catalyzes the NADPH-dependent rearrangement and reduction of 1-deoxy-D-xylulose-5-phosphate (DXP) to 2-C-methyl-D-erythritol 4-phosphate (MEP). This chain is 1-deoxy-D-xylulose 5-phosphate reductoisomerase, found in Sinorhizobium medicae (strain WSM419) (Ensifer medicae).